Here is a 248-residue protein sequence, read N- to C-terminus: UPF0736 protein Bcer98_0893 (248 aa).

This sequence belongs to the UPF0736 family.

This chain is UPF0736 protein Bcer98_0893, found in Bacillus cytotoxicus (strain DSM 22905 / CIP 110041 / 391-98 / NVH 391-98).